The following is a 369-amino-acid chain: sn-glycerol-3-phosphate import ATP-binding protein UgpC 1 (369 aa).

In terms of domain architecture, ABC transporter spans 4–234 (ISIRGVKKNY…PVSRFVAGFV (231 aa)). Position 36-43 (36-43 (GPSGCGKS)) interacts with ATP.

Belongs to the ABC transporter superfamily. sn-glycerol-3-phosphate importer (TC 3.A.1.1.3) family. The complex is composed of two ATP-binding proteins (UgpC), two transmembrane proteins (UgpA and UgpE) and a solute-binding protein (UgpB).

The protein resides in the cell inner membrane. It carries out the reaction sn-glycerol 3-phosphate(out) + ATP + H2O = sn-glycerol 3-phosphate(in) + ADP + phosphate + H(+). In terms of biological role, part of the ABC transporter complex UgpBAEC involved in sn-glycerol-3-phosphate (G3P) import. Responsible for energy coupling to the transport system. This is sn-glycerol-3-phosphate import ATP-binding protein UgpC 1 from Rhizobium johnstonii (strain DSM 114642 / LMG 32736 / 3841) (Rhizobium leguminosarum bv. viciae).